The sequence spans 315 residues: Leucine-rich repeat-containing protein 75B (315 aa).

The tract at residues 1 to 23 is disordered; it reads MGARLGRRAGPEAGSEAGAAAGC. The segment covering 11–23 has biased composition (low complexity); sequence PEAGSEAGAAAGC. 2 LRR repeats span residues 182 to 195 and 207 to 220; these read LAVL…LSDE and LPRL…GNRL. Residues 284-315 form a disordered region; the sequence is PEGSAAGATTPASTWDSTAAGLGPEPQACCAR. Positions 286 to 297 are enriched in low complexity; sequence GSAAGATTPAST.

The protein belongs to the LRRC75 family.

May suppress myogenic differentiation by modulating MYOG expression and Erk1/2 signaling. The sequence is that of Leucine-rich repeat-containing protein 75B from Homo sapiens (Human).